The following is a 136-amino-acid chain: Small ribosomal subunit protein bS16 (136 aa).

The protein belongs to the bacterial ribosomal protein bS16 family.

In Pseudarthrobacter chlorophenolicus (strain ATCC 700700 / DSM 12829 / CIP 107037 / JCM 12360 / KCTC 9906 / NCIMB 13794 / A6) (Arthrobacter chlorophenolicus), this protein is Small ribosomal subunit protein bS16.